The chain runs to 281 residues: uncharacterized protein (281 aa).

Transmembrane regions (helical) follow at residues 30–50, 54–74, 76–96, 106–126, 153–173, 198–218, 235–255, and 259–279; these read AIVA…FIVI, VFIS…GYYF, FNPL…MGWV, TLIG…IDLT, AGLD…FLAI, IALT…IALL, MMAV…ALSY, and LSSG…SLAF.

Belongs to the ABC-3 integral membrane protein family.

Its subcellular location is the cell membrane. This is an uncharacterized protein from Synechocystis sp. (strain ATCC 27184 / PCC 6803 / Kazusa).